Here is a 277-residue protein sequence, read N- to C-terminus: Sulfate transport system permease protein CysT (277 aa).

7 consecutive transmembrane segments (helical) span residues 17-37 (LGTSLLFVCLILLLPLSALVM), 64-84 (LLSAFVASIFNGVFGLLMAWI), 99-119 (LMDLPFALPTAVAGLTLASLF), 136-156 (VTYTWLGIAVAMAFTSIPFVV), 185-205 (FCKVVLPELSPALVAGVALSF), 215-235 (VIFIAGNIAWKTEVTSLMIFV), and 243-263 (PAASAIASVILAASLLLLFSI). Positions 60–263 (YKVTLLSAFV…AASLLLLFSI (204 aa)) constitute an ABC transmembrane type-1 domain.

The protein belongs to the binding-protein-dependent transport system permease family. CysTW subfamily. The complex is composed of two ATP-binding proteins (CysA), two transmembrane proteins (CysT and CysW) and a solute-binding protein (CysP).

It is found in the cell inner membrane. In terms of biological role, part of the ABC transporter complex CysAWTP (TC 3.A.1.6.1) involved in sulfate/thiosulfate import. Probably responsible for the translocation of the substrate across the membrane. The protein is Sulfate transport system permease protein CysT (cysU) of Escherichia coli (strain K12).